We begin with the raw amino-acid sequence, 210 residues long: Small ribosomal subunit protein uS4 (210 aa).

Positions 30–49 are disordered; that stretch reads EKSSLEKRKYPPGLPPKKKG. One can recognise an S4 RNA-binding domain in the interval 99–162; sequence RRLDNVLYRM…QKSAFIEENI (64 aa).

It belongs to the universal ribosomal protein uS4 family. Part of the 30S ribosomal subunit. Contacts protein S5. The interaction surface between S4 and S5 is involved in control of translational fidelity.

One of the primary rRNA binding proteins, it binds directly to 16S rRNA where it nucleates assembly of the body of the 30S subunit. Its function is as follows. With S5 and S12 plays an important role in translational accuracy. This Leptospira biflexa serovar Patoc (strain Patoc 1 / Ames) protein is Small ribosomal subunit protein uS4.